A 375-amino-acid polypeptide reads, in one-letter code: Queuine tRNA-ribosyltransferase (375 aa).

D89 (proton acceptor) is an active-site residue. Substrate contacts are provided by residues 89 to 93 (DSGGF), D143, Q185, and G212. Residues 243–249 (GVGKPED) form an RNA binding region. The active-site Nucleophile is the D262. Positions 267 to 271 (TRNAR) are RNA binding; important for wobble base 34 recognition. Zn(2+)-binding residues include C300, C302, C305, and H331.

This sequence belongs to the queuine tRNA-ribosyltransferase family. In terms of assembly, homodimer. Within each dimer, one monomer is responsible for RNA recognition and catalysis, while the other monomer binds to the replacement base PreQ1. It depends on Zn(2+) as a cofactor.

The enzyme catalyses 7-aminomethyl-7-carbaguanine + guanosine(34) in tRNA = 7-aminomethyl-7-carbaguanosine(34) in tRNA + guanine. It functions in the pathway tRNA modification; tRNA-queuosine biosynthesis. Functionally, catalyzes the base-exchange of a guanine (G) residue with the queuine precursor 7-aminomethyl-7-deazaguanine (PreQ1) at position 34 (anticodon wobble position) in tRNAs with GU(N) anticodons (tRNA-Asp, -Asn, -His and -Tyr). Catalysis occurs through a double-displacement mechanism. The nucleophile active site attacks the C1' of nucleotide 34 to detach the guanine base from the RNA, forming a covalent enzyme-RNA intermediate. The proton acceptor active site deprotonates the incoming PreQ1, allowing a nucleophilic attack on the C1' of the ribose to form the product. After dissociation, two additional enzymatic reactions on the tRNA convert PreQ1 to queuine (Q), resulting in the hypermodified nucleoside queuosine (7-(((4,5-cis-dihydroxy-2-cyclopenten-1-yl)amino)methyl)-7-deazaguanosine). The polypeptide is Queuine tRNA-ribosyltransferase (Pseudoalteromonas translucida (strain TAC 125)).